The primary structure comprises 109 residues: Probable glutaredoxin slr1562 (109 aa).

Positions 11–109 constitute a Glutaredoxin domain; sequence LSGRQADGIK…PLLATPPNPA (99 aa). Cys-31 and Cys-34 are disulfide-bonded.

The protein belongs to the glutaredoxin family.

Functionally, has a glutathione-disulfide oxidoreductase activity in the presence of NADPH and glutathione reductase. Reduces low molecular weight disulfides and proteins. This chain is Probable glutaredoxin slr1562, found in Synechocystis sp. (strain ATCC 27184 / PCC 6803 / Kazusa).